The following is a 323-amino-acid chain: Down-regulator of invasive growth 2 (323 aa).

Residues 1 to 10 are compositionally biased toward acidic residues; that stretch reads MNKEEQEDPQ. The segment at 1-26 is disordered; that stretch reads MNKEEQEDPQQEQISTVQENDPRNLQ. The span at 11–26 shows a compositional bias: polar residues; the sequence is QEQISTVQENDPRNLQ. Ser-34 is modified (phosphoserine). Residues 67–87 form a disordered region; sequence LSQKEEDHSGKPPTITTSPAE. Ser-225, Ser-266, and Ser-270 each carry phosphoserine.

As to quaternary structure, forms a complex with DIG1, STE12 and either FUS3 or KSS1. The interaction of FUS3 with STE12 depends on the presence of both DIG1 and DIG2. STE12 is lost from FUS3/DIG1/DIG2 complex after pheromone treatment. DIG1 and DIG2 have also been reported to interact with CLN1 and CLN2. Post-translationally, phosphorylated by FUS3 and KSS1, in a pheromone-stimulated manner.

Its subcellular location is the nucleus. Functionally, DIG2 and DIG1 are negative regulators of the filamentation and pheromone induced mating program. DIG1 and DIG2 inhibit the transcriptional activity of STE12 by direct protein-protein interaction. DIG2 binds to the DNA binding domain (DBD) of STE12 and thus inhibits transcription when overexpressed. In Saccharomyces cerevisiae (strain ATCC 204508 / S288c) (Baker's yeast), this protein is Down-regulator of invasive growth 2 (DIG2).